Here is a 453-residue protein sequence, read N- to C-terminus: O-glucose prenyltransferase PaPT (453 aa).

95 to 96 (AP) lines the L-tryptophan pocket. Substrate-binding residues include lysine 210, tyrosine 212, arginine 279, lysine 281, tyrosine 283, tyrosine 368, and tyrosine 435.

It belongs to the tryptophan dimethylallyltransferase family.

It functions in the pathway mycotoxin biosynthesis. Its function is as follows. O-glucose prenyltransferase; part of the 2 gene clusters that mediate the biosynthesis of fusicoccins, diterpene glucosides that display phytohormone-like activity and function as potent activators of plasma membrane H(+)-ATPases in plants by modifying 14-3-3 proteins and cause the plant disease constriction canker. The first step in the pathway is performed by the fusicoccadiene synthase PaFS that possesses both prenyl transferase and terpene cyclase activity, converting isopentenyl diphosphate and dimethylallyl diphosphate into geranylgeranyl diphosphate (GGDP) and successively converting GGDP into fusicocca-2,10(14)-diene, a precursor for fusicoccin H. The second step is the oxidation at the C-8 position by the cytochrome P450 monooxygenase PaP450-2 to yield fusicocca-2,10(14)-diene-8-beta-ol. The cytochrome P450 monooxygenase PaP450-1 then catalyzes the hydroxylation at the C-16 position to produce fusicocca-2,10(14)-diene-8-beta,16-diol. The dioxygenase fc-dox then catalyzes the 16-oxydation of fusicocca-2,10(14)-diene-8-beta,16-diol to yield an aldehyde (8-beta-hydroxyfusicocca-1,10(14)-dien-16-al). The short-chain dehydrogenase/reductase fc-sdr catalyzes the reduction of the aldehyde to yield fusicocca-1,10(14)-diene-8-beta,16-diol. The next step is the hydroxylation at C-9 performed by the cytochrome P450 monooxygenase PaP450-3 that leads to fusicoccin H aglycon which is glycosylated to fusicoccin H by the O-glycosyltransferase PaGT. Hydroxylation at C-12 by the cytochrome P450 monooxygenase PaP450-4 leads then to the production of fusicoccin Q and is followed by methylation by the O-methyltransferase PaMT to yield fusicoccin P. Fusicoccin P is further converted to fusicoccin J via prenylation by the O-glucose prenyltransferase PaPT. Cytochrome P450 monooxygenase PaP450-5 then performs hydroxylation at C-19 to yield dideacetyl-fusicoccin A which is acetylated to 3'-O-deacetyl-fusicoccin A by the O-acetyltransferase PaAT-2. Finally, a another acetylation by the O-acetyltransferase PaAT-1 yields fusicoccin A. The polypeptide is O-glucose prenyltransferase PaPT (Phomopsis amygdali (Fusicoccum amygdali)).